Consider the following 372-residue polypeptide: MKVLTVFGTRPEAIKMAPVILELQKHNTITSKVCITAQHREMLDQVLSLFEIKADYDLNIMKPNQSLQEITTNIISSLTDVLEDFKPDCVLVHGDTTTTFAASLAAFYQKIPVGHIEAGLRTYNLYSPWPEEANRRLTSVLSQWHFAPTEDSKNNLLSESIPSDKVIVTGNTVIDALMVSLEKLKITTIKKQMEQAFPFIQDNSKVILITAHRRENHGEGIKNIGLSILELAKKYPTFSFVIPLHLNPNVRKPIQDLLSSVHNVHLIEPQEYLPFVYLMSKSHIILSDSGGIQEEAPSLGKPVLVLRDTTERPEAVAAGTVKLVGSETQNIIESFTQLIEYPEYYEKMANIENPYGIGNASKIIVETLLKNR.

Substrate is bound by residues Arg-10, Lys-15, Asp-95, Glu-117, His-212, Gln-270, Phe-275, 289–291 (SGG), Glu-295, and Arg-312.

The protein belongs to the UDP-N-acetylglucosamine 2-epimerase family.

The catalysed reaction is UDP-N-acetyl-alpha-D-glucosamine = UDP-N-acetyl-alpha-D-mannosamine. Its pathway is capsule biogenesis; capsule polysaccharide biosynthesis. Activated by UDP-GlcNAc and inhibited by 2-acetamidoglucal and UDP. Activity is strongly decreased in the presence of Co(2+) and abolished in the presence of Mn(2+) or Zn(2+). In terms of biological role, catalyzes the interconversion between UDP-N-acetylglucosamine (UDP-GlcNAc) and UDP-N-acetylmannosamine (UDP-ManNAc). Involved in the biosynthesis of the capsular polysaccharides. In vitro, can also use several chemoenzymatically synthesized UDP-ManNAc derivatives as substrates, with lower efficiency. This chain is UDP-N-acetylglucosamine 2-epimerase, found in Neisseria meningitidis serogroup A / serotype 4A (strain DSM 15465 / Z2491).